The following is a 342-amino-acid chain: Ferredoxin--NADP reductase (342 aa).

Residues C17, D36, Q44, Y49, V89, F124, D289, and T330 each contribute to the FAD site.

This sequence belongs to the ferredoxin--NADP reductase type 2 family. As to quaternary structure, homodimer. The cofactor is FAD.

The enzyme catalyses 2 reduced [2Fe-2S]-[ferredoxin] + NADP(+) + H(+) = 2 oxidized [2Fe-2S]-[ferredoxin] + NADPH. This Nitrobacter winogradskyi (strain ATCC 25391 / DSM 10237 / CIP 104748 / NCIMB 11846 / Nb-255) protein is Ferredoxin--NADP reductase.